A 315-amino-acid polypeptide reads, in one-letter code: Methionyl-tRNA formyltransferase (315 aa).

A (6S)-5,6,7,8-tetrahydrofolate-binding site is contributed by 107-110; that stretch reads SLLP.

This sequence belongs to the Fmt family.

It catalyses the reaction L-methionyl-tRNA(fMet) + (6R)-10-formyltetrahydrofolate = N-formyl-L-methionyl-tRNA(fMet) + (6S)-5,6,7,8-tetrahydrofolate + H(+). In terms of biological role, attaches a formyl group to the free amino group of methionyl-tRNA(fMet). The formyl group appears to play a dual role in the initiator identity of N-formylmethionyl-tRNA by promoting its recognition by IF2 and preventing the misappropriation of this tRNA by the elongation apparatus. In Borrelia garinii subsp. bavariensis (strain ATCC BAA-2496 / DSM 23469 / PBi) (Borreliella bavariensis), this protein is Methionyl-tRNA formyltransferase.